The sequence spans 836 residues: ATP-binding cassette sub-family B member 6 (836 aa).

Topologically, residues Met-1–Cys-26 are lumenal. Positions Met-1 to Trp-205 are required for the lysosomal targeting. The interval Met-1 to Arg-236 is required for ATPase activity. A disulfide bond links Cys-8 and Cys-26. Residues Phe-27–Val-47 form a helical membrane-spanning segment. The Cytoplasmic segment spans residues Leu-48–Pro-72. A helical transmembrane segment spans residues Tyr-73–Gly-93. Topologically, residues Arg-94–Tyr-106 are lumenal. Residues Leu-107–Val-127 form a helical membrane-spanning segment. The Cytoplasmic portion of the chain corresponds to Glu-128–Ser-147. The chain crosses the membrane as a helical span at residues Leu-148 to Trp-168. At Asn-169–Gln-185 the chain is on the lumenal side. A helical transmembrane segment spans residues Phe-186–Ala-206. The Cytoplasmic portion of the chain corresponds to Pro-207–Thr-264. A helical membrane pass occupies residues Val-265–Phe-285. An ABC transmembrane type-1 domain is found at Val-265–Thr-556. Residues Tyr-286–Thr-305 lie on the Lumenal side of the membrane. Residues Val-306–Val-326 form a helical membrane-spanning segment. The Cytoplasmic portion of the chain corresponds to Ser-327–Arg-375. Residues Gly-376 to Ala-396 traverse the membrane as a helical segment. Residue Asp-397 is a topological domain, lumenal. A helical transmembrane segment spans residues Ile-398–Phe-418. Residues Leu-419 to Gln-499 lie on the Cytoplasmic side of the membrane. The helical transmembrane segment at Thr-500–Val-520 threads the bilayer. Residues Ser-521 to Asp-529 are Lumenal-facing. A helical transmembrane segment spans residues Phe-530 to Tyr-550. At Tyr-551–Ser-836 the chain is on the cytoplasmic side. The ABC transporter domain occupies Val-590 to Leu-824. Residues Tyr-599 and Gly-623–Arg-634 contribute to the ATP site.

The protein belongs to the ABC transporter superfamily. ABCB family. Heavy Metal importer (TC 3.A.1.210) subfamily. As to quaternary structure, homodimer. In terms of processing, N-glycosylated. In terms of tissue distribution, ubiquitously expressed. Highly expressed in testis by meiotic pachytene spermatocytes and post-meiotic early spermatids.

The protein resides in the cell membrane. It localises to the mitochondrion outer membrane. It is found in the endoplasmic reticulum membrane. The protein localises to the golgi apparatus membrane. Its subcellular location is the endosome membrane. The protein resides in the lysosome membrane. It localises to the late endosome membrane. It is found in the early endosome membrane. The protein localises to the secreted. Its subcellular location is the extracellular exosome. The protein resides in the mitochondrion. It localises to the endosome. It is found in the multivesicular body membrane. The protein localises to the melanosome membrane. It carries out the reaction heme b(in) + ATP + H2O = heme b(out) + ADP + phosphate + H(+). The enzyme catalyses coproporphyrin III(in) + ATP + H2O = coproporphyrin III(out) + ADP + phosphate + H(+). The catalysed reaction is pheophorbide a(in) + ATP + H2O = pheophorbide a(out) + ADP + phosphate + H(+). It catalyses the reaction coproporphyrinogen III(in) + ATP + H2O = coproporphyrinogen III(out) + ADP + phosphate + H(+). It carries out the reaction protoporphyrin IX(in) + ATP + H2O = protoporphyrin IX(out) + ADP + phosphate + H(+). The enzyme catalyses coproporphyrin I(in) + ATP + H2O = coproporphyrin I(out) + ADP + phosphate + H(+). The catalysed reaction is uroporphyrin I(in) + ATP + H2O = uroporphyrin I(out) + ADP + phosphate + H(+). It catalyses the reaction uroporphyrin III(in) + ATP + H2O = uroporphyrin III(out) + ADP + phosphate + H(+). Functionally, ATP-dependent transporter that catalyzes the transport of a broad-spectrum of porphyrins from the cytoplasm to the extracellular space through the plasma membrane or into the vesicle lumen. May also function as an ATP-dependent importer of porphyrins from the cytoplasm into the mitochondria, in turn may participate in the de novo heme biosynthesis regulation and in the coordination of heme and iron homeostasis during phenylhydrazine stress. May play a key role in the early steps of melanogenesis producing PMEL amyloid fibrils. In vitro, it confers to cells a resistance to toxic metal such as arsenic and cadmium and against chemotherapeutics agent such as 5-fluorouracil, SN-38 and vincristin. In addition may play a role in the transition metal homeostasis. The protein is ATP-binding cassette sub-family B member 6 of Rattus norvegicus (Rat).